A 589-amino-acid chain; its full sequence is MKRTTYAGLVDEKYLNQTVTLSGWVQKRRDFGDLIFVDLRDREGIVQLTFNATHAEALAVAENMRNEYVISVTGQVVRREASQINNKIHSGQIEIDVIEAEILATSKTPPFYIEDNVNANEELKLQYRYLDLRRPEMQKNLRIRSKIMSSAMHFMDQNDFINIETPILAKSTPEGARDYLVPSRIFPGSFYALPQSPQLFKQLLMGSGFDRYFQIARAFRDEDLRGDRQPEFTQMDVETSFMSADEIRELVNAWVKAMMSDVVNFDLDTTKIPTLTWQESMDRFGTDKPDLRIAYELKDVSETVKSSEFGVFAKAVEAGGVVKAIAVPGGAENYSRKDIDKMAQYIERFGAKGLAWLKVTDEGISGPIAKFFPNHAALLQVTGAKPGDLLLFGAGRNDIVAATLDYLRRQTAKDLNLIDMTNPWAFAWIVDWPLFEYSEDFDRWIAAHHPFTMPNEEDLHYLDDGEDPHQAHAQSYDLVLNGYELGSGSIRIHRMDIQEKMLKALGFTPEAAHEAFGFLLEGMTFGFPPMGGIALGLDRLAMLLAGQENIREVIAFPKNSRATEPMTQAPTRVDHKQVNDLGLFVSDVE.

An L-aspartate-binding site is contributed by Glu174. Residues 198–201 (QLFK) form an aspartate region. Arg220 lines the L-aspartate pocket. ATP is bound by residues 220-222 (RDE) and Gln229. His448 is a binding site for L-aspartate. Glu484 contributes to the ATP binding site. L-aspartate is bound at residue Arg491. 536–539 (GLDR) contacts ATP.

Belongs to the class-II aminoacyl-tRNA synthetase family. Type 1 subfamily. Homodimer.

The protein localises to the cytoplasm. It carries out the reaction tRNA(Asp) + L-aspartate + ATP = L-aspartyl-tRNA(Asp) + AMP + diphosphate. In terms of biological role, catalyzes the attachment of L-aspartate to tRNA(Asp) in a two-step reaction: L-aspartate is first activated by ATP to form Asp-AMP and then transferred to the acceptor end of tRNA(Asp). This chain is Aspartate--tRNA ligase, found in Leuconostoc citreum (strain KM20).